A 373-amino-acid chain; its full sequence is Filamin-binding LIM protein 1 (373 aa).

Residues 1–70 (MASKPEKRVA…SPWTTPGRAA (70 aa)) form a filamin-binding region. Disordered regions lie at residues 41 to 119 (RPWE…PSEE) and 135 to 176 (QLHL…PVEK). The segment covering 104 to 114 (LPPPPPPPPVL) has biased composition (pro residues). 3 LIM zinc-binding domains span residues 181–242 (DICA…TLER), 243–300 (CGKC…RKFA), and 301–370 (PVCS…RSAA). The tract at residues 276–373 (IGDESFALGS…HVKRSAAGCC (98 aa)) is FERMT2-binding.

As to quaternary structure, interacts with NKX2-5. Isoform 1 and isoform 3 interact with FERMT2, FLNA, FLNB and FLNC. Isoform 2 interacts with FLNB. Isoform 1 and isoform 3 are expressed in heart, kidney, lung, pancreas, placenta and platelets. Isoform 2 is expressed in brain, heart, kidney, lung, pancreas, placenta, skeletal muscle and platelets.

It localises to the cell junction. The protein localises to the focal adhesion. It is found in the cytoplasm. Its subcellular location is the cytoskeleton. The protein resides in the stress fiber. Functionally, serves as an anchoring site for cell-ECM adhesion proteins and filamin-containing actin filaments. Is implicated in cell shape modulation (spreading) and motility. May participate in the regulation of filamin-mediated cross-linking and stabilization of actin filaments. May also regulate the assembly of filamin-containing signaling complexes that control actin assembly. Promotes dissociation of FLNA from ITGB3 and ITGB7. Promotes activation of integrins and regulates integrin-mediated cell-cell adhesion. This Homo sapiens (Human) protein is Filamin-binding LIM protein 1 (FBLIM1).